Reading from the N-terminus, the 258-residue chain is Global transcriptional regulator CodY (258 aa).

A GAF domain region spans residues 1–156 (MSILLNKTRK…SATIVGLEIL (156 aa)). The H-T-H motif DNA-binding region spans 204 to 223 (ASKIADKVGITRSVIVNALR).

The protein belongs to the CodY family.

It localises to the cytoplasm. Its function is as follows. DNA-binding global transcriptional regulator which is involved in the adaptive response to starvation and acts by directly or indirectly controlling the expression of numerous genes in response to nutrient availability. During rapid exponential growth, CodY is highly active and represses genes whose products allow adaptation to nutrient depletion. The chain is Global transcriptional regulator CodY from Clostridium acetobutylicum (strain ATCC 824 / DSM 792 / JCM 1419 / IAM 19013 / LMG 5710 / NBRC 13948 / NRRL B-527 / VKM B-1787 / 2291 / W).